We begin with the raw amino-acid sequence, 336 residues long: Tryptophan--tRNA ligase 1 (336 aa).

ATP is bound by residues 9 to 11 (KPT) and 17 to 18 (GN). A 'HIGH' region motif is present at residues 10–18 (PTGHLTLGN). D137 provides a ligand contact to L-tryptophan. ATP contacts are provided by residues 149–151 (GED), V188, and 197–201 (KMGKS). The short motif at 197–201 (KMGKS) is the 'KMSKS' region element.

It belongs to the class-I aminoacyl-tRNA synthetase family. As to quaternary structure, homodimer.

It is found in the cytoplasm. It catalyses the reaction tRNA(Trp) + L-tryptophan + ATP = L-tryptophyl-tRNA(Trp) + AMP + diphosphate + H(+). Its function is as follows. Catalyzes the attachment of tryptophan to tRNA(Trp). This is Tryptophan--tRNA ligase 1 from Streptomyces coelicolor (strain ATCC BAA-471 / A3(2) / M145).